We begin with the raw amino-acid sequence, 361 residues long: tRNA 2-selenouridine synthase (361 aa).

In terms of domain architecture, Rhodanese spans 12–135 (VLKNIPLIDV…FRRYLIDHLE (124 aa)). C95 serves as the catalytic S-selanylcysteine intermediate.

It belongs to the SelU family. As to quaternary structure, monomer.

The catalysed reaction is 5-methylaminomethyl-2-thiouridine(34) in tRNA + selenophosphate + (2E)-geranyl diphosphate + H2O + H(+) = 5-methylaminomethyl-2-selenouridine(34) in tRNA + (2E)-thiogeraniol + phosphate + diphosphate. The enzyme catalyses 5-methylaminomethyl-2-thiouridine(34) in tRNA + (2E)-geranyl diphosphate = 5-methylaminomethyl-S-(2E)-geranyl-thiouridine(34) in tRNA + diphosphate. It catalyses the reaction 5-methylaminomethyl-S-(2E)-geranyl-thiouridine(34) in tRNA + selenophosphate + H(+) = 5-methylaminomethyl-2-(Se-phospho)selenouridine(34) in tRNA + (2E)-thiogeraniol. It carries out the reaction 5-methylaminomethyl-2-(Se-phospho)selenouridine(34) in tRNA + H2O = 5-methylaminomethyl-2-selenouridine(34) in tRNA + phosphate. Its function is as follows. Involved in the post-transcriptional modification of the uridine at the wobble position (U34) of tRNA(Lys), tRNA(Glu) and tRNA(Gln). Catalyzes the conversion of 2-thiouridine (S2U-RNA) to 2-selenouridine (Se2U-RNA). Acts in a two-step process involving geranylation of 2-thiouridine (S2U) to S-geranyl-2-thiouridine (geS2U) and subsequent selenation of the latter derivative to 2-selenouridine (Se2U) in the tRNA chain. The chain is tRNA 2-selenouridine synthase from Hydrogenovibrio crunogenus (strain DSM 25203 / XCL-2) (Thiomicrospira crunogena).